A 182-amino-acid chain; its full sequence is NADH-quinone oxidoreductase subunit I (182 aa).

4Fe-4S ferredoxin-type domains follow at residues 52–82 and 92–121; these read LTRD…LQKA and DFFR…LTPD. [4Fe-4S] cluster contacts are provided by Cys62, Cys65, Cys68, Cys72, Cys101, Cys104, Cys107, and Cys111.

This sequence belongs to the complex I 23 kDa subunit family. In terms of assembly, NDH-1 is composed of 13 different subunits. Subunits NuoA, H, J, K, L, M, N constitute the membrane sector of the complex. [4Fe-4S] cluster serves as cofactor.

The protein localises to the cell inner membrane. The catalysed reaction is a quinone + NADH + 5 H(+)(in) = a quinol + NAD(+) + 4 H(+)(out). In terms of biological role, NDH-1 shuttles electrons from NADH, via FMN and iron-sulfur (Fe-S) centers, to quinones in the respiratory chain. The immediate electron acceptor for the enzyme in this species is believed to be ubiquinone. Couples the redox reaction to proton translocation (for every two electrons transferred, four hydrogen ions are translocated across the cytoplasmic membrane), and thus conserves the redox energy in a proton gradient. The polypeptide is NADH-quinone oxidoreductase subunit I (Pseudomonas fluorescens (strain Pf0-1)).